The primary structure comprises 186 residues: Probable chorismate pyruvate-lyase (186 aa).

Positions 80, 118, and 170 each coordinate substrate.

This sequence belongs to the UbiC family.

The protein resides in the cytoplasm. The enzyme catalyses chorismate = 4-hydroxybenzoate + pyruvate. It functions in the pathway cofactor biosynthesis; ubiquinone biosynthesis. In terms of biological role, removes the pyruvyl group from chorismate, with concomitant aromatization of the ring, to provide 4-hydroxybenzoate (4HB) for the ubiquinone pathway. The polypeptide is Probable chorismate pyruvate-lyase (Pseudomonas savastanoi pv. phaseolicola (strain 1448A / Race 6) (Pseudomonas syringae pv. phaseolicola (strain 1448A / Race 6))).